We begin with the raw amino-acid sequence, 397 residues long: Tryptophan synthase beta chain (397 aa).

Residue Lys87 is modified to N6-(pyridoxal phosphate)lysine.

It belongs to the TrpB family. As to quaternary structure, tetramer of two alpha and two beta chains. It depends on pyridoxal 5'-phosphate as a cofactor.

It carries out the reaction (1S,2R)-1-C-(indol-3-yl)glycerol 3-phosphate + L-serine = D-glyceraldehyde 3-phosphate + L-tryptophan + H2O. It functions in the pathway amino-acid biosynthesis; L-tryptophan biosynthesis; L-tryptophan from chorismate: step 5/5. Functionally, the beta subunit is responsible for the synthesis of L-tryptophan from indole and L-serine. The protein is Tryptophan synthase beta chain of Escherichia coli O127:H6 (strain E2348/69 / EPEC).